We begin with the raw amino-acid sequence, 222 residues long: Latexin (222 aa).

The Cystatin LXN-type 1 domain maps to 1–97 (MEIPPTHYAA…NFTFEGEIGK (97 aa)). Lys-55 carries the post-translational modification N6-acetyllysine. Residues 98–117 (NPDEEDNTFYQSLMSLKRPL) form an alpha-helical linker region. The 105-residue stretch at 118–222 (EAQDIPDNFG…SRLPKEGQAE (105 aa)) folds into the Cystatin LXN-type 2 domain.

The protein belongs to the protease inhibitor I47 (latexin) family. In terms of tissue distribution, highly enriched in macrophages.

The protein localises to the cytoplasm. Hardly reversible, non-competitive, and potent inhibitor of CPA1, CPA2 and CPA4. May play a role in inflammation. The polypeptide is Latexin (Lxn) (Mus musculus (Mouse)).